Here is a 930-residue protein sequence, read N- to C-terminus: Isoleucine--tRNA ligase (930 aa).

The 'HIGH' region signature appears at 57–67 (PYANGNIHVGH). E554 serves as a coordination point for L-isoleucyl-5'-AMP. The short motif at 595 to 599 (KMSKS) is the 'KMSKS' region element. K598 is an ATP binding site. Zn(2+) contacts are provided by C888, C891, C908, and C911.

It belongs to the class-I aminoacyl-tRNA synthetase family. IleS type 1 subfamily. In terms of assembly, monomer. Requires Zn(2+) as cofactor.

It is found in the cytoplasm. The catalysed reaction is tRNA(Ile) + L-isoleucine + ATP = L-isoleucyl-tRNA(Ile) + AMP + diphosphate. Functionally, catalyzes the attachment of isoleucine to tRNA(Ile). As IleRS can inadvertently accommodate and process structurally similar amino acids such as valine, to avoid such errors it has two additional distinct tRNA(Ile)-dependent editing activities. One activity is designated as 'pretransfer' editing and involves the hydrolysis of activated Val-AMP. The other activity is designated 'posttransfer' editing and involves deacylation of mischarged Val-tRNA(Ile). In Streptococcus pneumoniae serotype 4 (strain ATCC BAA-334 / TIGR4), this protein is Isoleucine--tRNA ligase.